The primary structure comprises 121 residues: Glycine cleavage system H protein (121 aa).

The Lipoyl-binding domain maps to 22–102 (IAWVGITKYA…DSSVWLFKAE (81 aa)). N6-lipoyllysine is present on K63.

The protein belongs to the GcvH family. In terms of assembly, the glycine cleavage system is composed of four proteins: P, T, L and H. It depends on (R)-lipoate as a cofactor.

The glycine cleavage system catalyzes the degradation of glycine. The H protein shuttles the methylamine group of glycine from the P protein to the T protein. The chain is Glycine cleavage system H protein from Tropheryma whipplei (strain TW08/27) (Whipple's bacillus).